Reading from the N-terminus, the 472-residue chain is Probable glycine dehydrogenase (decarboxylating) subunit 2 (472 aa).

An N6-(pyridoxal phosphate)lysine modification is found at lysine 268.

It belongs to the GcvP family. C-terminal subunit subfamily. The glycine cleavage system is composed of four proteins: P, T, L and H. In this organism, the P 'protein' is a heterodimer of two subunits. Pyridoxal 5'-phosphate serves as cofactor.

The enzyme catalyses N(6)-[(R)-lipoyl]-L-lysyl-[glycine-cleavage complex H protein] + glycine + H(+) = N(6)-[(R)-S(8)-aminomethyldihydrolipoyl]-L-lysyl-[glycine-cleavage complex H protein] + CO2. In terms of biological role, the glycine cleavage system catalyzes the degradation of glycine. The P protein binds the alpha-amino group of glycine through its pyridoxal phosphate cofactor; CO(2) is released and the remaining methylamine moiety is then transferred to the lipoamide cofactor of the H protein. This Thermoplasma volcanium (strain ATCC 51530 / DSM 4299 / JCM 9571 / NBRC 15438 / GSS1) protein is Probable glycine dehydrogenase (decarboxylating) subunit 2.